Here is a 26-residue protein sequence, read N- to C-terminus: Superoxide dismutase [Cu-Zn] (26 aa).

C7 is lipidated: S-palmitoyl cysteine.

The protein belongs to the Cu-Zn superoxide dismutase family. As to quaternary structure, homotrimer. The cofactor is Cu cation. It depends on Zn(2+) as a cofactor.

Its subcellular location is the cytoplasm. It is found in the nucleus. The enzyme catalyses 2 superoxide + 2 H(+) = H2O2 + O2. Functionally, destroys radicals which are normally produced within the cells and which are toxic to biological systems. The chain is Superoxide dismutase [Cu-Zn] (sod1) from Paralichthys olivaceus (Bastard halibut).